Reading from the N-terminus, the 239-residue chain is 1-(5-phosphoribosyl)-5-[(5-phosphoribosylamino)methylideneamino] imidazole-4-carboxamide isomerase (239 aa).

The Proton acceptor role is filled by Asp9. The Proton donor role is filled by Asp131.

The protein belongs to the HisA/HisF family.

It is found in the cytoplasm. The catalysed reaction is 1-(5-phospho-beta-D-ribosyl)-5-[(5-phospho-beta-D-ribosylamino)methylideneamino]imidazole-4-carboxamide = 5-[(5-phospho-1-deoxy-D-ribulos-1-ylimino)methylamino]-1-(5-phospho-beta-D-ribosyl)imidazole-4-carboxamide. The protein operates within amino-acid biosynthesis; L-histidine biosynthesis; L-histidine from 5-phospho-alpha-D-ribose 1-diphosphate: step 4/9. The protein is 1-(5-phosphoribosyl)-5-[(5-phosphoribosylamino)methylideneamino] imidazole-4-carboxamide isomerase of Bacteroides thetaiotaomicron (strain ATCC 29148 / DSM 2079 / JCM 5827 / CCUG 10774 / NCTC 10582 / VPI-5482 / E50).